A 424-amino-acid chain; its full sequence is Neurotensin receptor type 1 (424 aa).

The tract at residues 1 to 23 (MHLNSSVPQGTPGEPDAQPFSGP) is disordered. The Extracellular segment spans residues 1–68 (MHLNSSVPQG…TDIYSKVLVT (68 aa)). N-linked (GlcNAc...) asparagine glycosylation is found at Asn4, Asn38, and Asn42. A helical transmembrane segment spans residues 69–89 (AIYLALFVVGTVGNSVTAFTL). At 90-103 (ARKKSLQSLQSTVH) the chain is on the cytoplasmic side. A helical transmembrane segment spans residues 104 to 123 (YHLGSLALSDLLILLLAMPV). Residues 124 to 143 (ELYNFIWVHHPWAFGDAGCR) are Extracellular-facing. Residues Cys142 and Cys225 are joined by a disulfide bond. Residues 144-165 (GYYFLRDACTYATALNVASLSV) form a helical membrane-spanning segment. Residues 166 to 185 (ERYLAICHPFKAKTLMSRSR) lie on the Cytoplasmic side of the membrane. A helical membrane pass occupies residues 186-206 (TKKFISAIWLASALLAIPMLF). Residues 207-235 (TMGLQNRSGDGTHPGGLVCTPIVDTATVK) lie on the Extracellular side of the membrane. The helical transmembrane segment at 236–260 (VVIQVNTFMSFLFPMLVISILNTVI) threads the bilayer. At 261-308 (ANKLTVMVHQAAEQGRVCTVGTHNGLEHSTFNMTIEPGRVQALRHGVL) the chain is on the cytoplasmic side. The helical transmembrane segment at 309 to 330 (VLRAVVIAFVVCWLPYHVRRLM) threads the bilayer. The tract at residues 326 to 349 (VRRLMFCYISDEQWTTFLFDFYHY) is neurotensin binding. Residues 331–348 (FCYISDEQWTTFLFDFYH) lie on the Extracellular side of the membrane. Residues 349-369 (YFYMLTNALFYVSSAINPILY) traverse the membrane as a helical segment. The Cytoplasmic portion of the chain corresponds to 370-424 (NLVSANFRQVFLSTLACLCPGWRHRRKKRPTFSRKPNSMSSNHAFSTSATRETLY). S-palmitoyl cysteine attachment occurs at residues Cys386 and Cys388. The interval 397-424 (KRPTFSRKPNSMSSNHAFSTSATRETLY) is disordered. Over residues 403 to 424 (RKPNSMSSNHAFSTSATRETLY) the composition is skewed to polar residues.

Belongs to the G-protein coupled receptor 1 family. Neurotensin receptor subfamily. NTSR1 sub-subfamily. In terms of assembly, interacts (palmitoylated form) with GNA11. Post-translationally, N-glycosylated. Palmitoylated; this is required for normal localization at membrane rafts and normal GNA11-mediated activation of down-stream signaling cascades. The palmitoylation level increases in response to neurotensin treatment. Detected in brain and small intestine.

Its subcellular location is the cell membrane. It is found in the membrane raft. In terms of biological role, G-protein coupled receptor for the tridecapeptide neurotensin (NTS). Signaling is effected via G proteins that activate a phosphatidylinositol-calcium second messenger system. Signaling leads to the activation of downstream MAP kinases and protects cells against apoptosis. The chain is Neurotensin receptor type 1 (Ntsr1) from Rattus norvegicus (Rat).